Here is a 179-residue protein sequence, read N- to C-terminus: Stress response regulator gls24 homolog (179 aa).

The interval 147-179 (TSEFTSHQVENVKASVDNGVEKLQDQKAEPRVK) is disordered. Positions 165-179 (GVEKLQDQKAEPRVK) are enriched in basic and acidic residues.

Belongs to the asp23 family.

The sequence is that of Stress response regulator gls24 homolog from Streptococcus pyogenes serotype M28 (strain MGAS6180).